The primary structure comprises 223 residues: MKKRLHLIIADSELELVPESIIDHPAIVNYAKRRKKKPEKIILDSTYHHAALRQLEDGERRGRPDIVHICLLNALDSILNKEDRLRVYVHTRNDEVIYVDPSTRLPRNYNRFIGLMESLFEKKVVPEDLQLLRLEKKTLAELINEISPDAVFIMHENGEFMIPKHFGKLLASFKKPVVIVGGFPHGDFRSKVEGVKISLYREPLMAWTIVNEVIVSYEWEVIK.

Residues Gly181, Gly186, and 199–204 each bind S-adenosyl-L-methionine; that span reads LYREPL.

It belongs to the class IV-like SAM-binding methyltransferase superfamily. RNA methyltransferase NEP1 family. As to quaternary structure, homodimer.

The enzyme catalyses a pseudouridine in rRNA + S-adenosyl-L-methionine = an N(1)-methylpseudouridine in rRNA + S-adenosyl-L-homocysteine + H(+). Its function is as follows. Methyltransferase involved in ribosomal biogenesis. Specifically catalyzes the N1-methylation of the pseudouridine corresponding to position 914 in M.jannaschii 16S rRNA. The chain is Ribosomal RNA small subunit methyltransferase Nep1 from Pyrococcus furiosus (strain ATCC 43587 / DSM 3638 / JCM 8422 / Vc1).